The sequence spans 146 residues: Anti-sigma F factor (146 aa).

It belongs to the anti-sigma-factor family.

The catalysed reaction is L-seryl-[protein] + ATP = O-phospho-L-seryl-[protein] + ADP + H(+). It catalyses the reaction L-threonyl-[protein] + ATP = O-phospho-L-threonyl-[protein] + ADP + H(+). Binds to sigma F and blocks its ability to form an RNA polymerase holoenzyme (E-sigma F). Phosphorylates SpoIIAA on a serine residue. This phosphorylation may enable SpoIIAA to act as an anti-anti-sigma factor that counteracts SpoIIAB and thus releases sigma F from inhibition. This is Anti-sigma F factor from Shouchella clausii (strain KSM-K16) (Alkalihalobacillus clausii).